A 344-amino-acid chain; its full sequence is MSKHAVVQFGVVYALLFPGVFGFVPSPTNVSVVCHNFVNVLYWNYSNPTEQTKFAIKVEPYESPSQTVDTSQTYLDISSYSTDVEDDYLVLLTAHDGQEKSEDVSIRFTYSKDYFDENKHKYKCSLDFPAVNTSVHKDVIEVSFQHPFKLYKQEIMKEEFTYKITHDEQMVKYSCFEDEDLCNAEVHFNQSVAGQCVELKLEGVIAGIPSYTYSNVCVPQPTPETDKTGIIAALIGGATVVLFIIMGFVWLLWRKWSNIPQMPQGLWCIISKQSHTMLLSQPEPTDICPVTSQGPLNYLTEEDQSVSARDDTGADPPVVSEEGMAGEDSQGLGCSSDYDRPKFL.

The signal sequence occupies residues 1–22 (MSKHAVVQFGVVYALLFPGVFG). The Extracellular portion of the chain corresponds to 23 to 229 (FVPSPTNVSV…QPTPETDKTG (207 aa)). The 79-residue stretch at 24-102 (VPSPTNVSVV…TAHDGQEKSE (79 aa)) folds into the Fibronectin type-III domain. N-linked (GlcNAc...) asparagine glycans are attached at residues Asn-29, Asn-44, Asn-132, and Asn-189. A helical transmembrane segment spans residues 230-250 (IIAALIGGATVVLFIIMGFVW). Residues 251–344 (LLWRKWSNIP…SSDYDRPKFL (94 aa)) lie on the Cytoplasmic side of the membrane. The disordered stretch occupies residues 300-344 (TEEDQSVSARDDTGADPPVVSEEGMAGEDSQGLGCSSDYDRPKFL).

Belongs to the type II cytokine receptor family. In terms of tissue distribution, highly expressed in brain. Also detected in spleen, heart, intestine, gill and kidney. In immune cell populations, detected at low levels in monocytes, peripheral blood leukocytes, splenocytes, neutrophils and mature macrophages.

It localises to the cell membrane. Receptor which shows binding specificity for the cytokine ifng1 (interferon gamma 1). The sequence is that of Interferon gamma receptor 1-like from Carassius auratus (Goldfish).